The chain runs to 969 residues: Isoleucine--tRNA ligase (969 aa).

Positions 68 to 78 (PYANGNLHMGH) match the 'HIGH' region motif. Glutamate 584 is an L-isoleucyl-5'-AMP binding site. The 'KMSKS' region motif lies at 625 to 629 (KMSKS). An ATP-binding site is contributed by lysine 628. Zn(2+) is bound by residues cysteine 938, cysteine 941, cysteine 958, and cysteine 961.

Belongs to the class-I aminoacyl-tRNA synthetase family. IleS type 1 subfamily. In terms of assembly, monomer. Requires Zn(2+) as cofactor.

The protein resides in the cytoplasm. The catalysed reaction is tRNA(Ile) + L-isoleucine + ATP = L-isoleucyl-tRNA(Ile) + AMP + diphosphate. In terms of biological role, catalyzes the attachment of isoleucine to tRNA(Ile). As IleRS can inadvertently accommodate and process structurally similar amino acids such as valine, to avoid such errors it has two additional distinct tRNA(Ile)-dependent editing activities. One activity is designated as 'pretransfer' editing and involves the hydrolysis of activated Val-AMP. The other activity is designated 'posttransfer' editing and involves deacylation of mischarged Val-tRNA(Ile). This Prochlorococcus marinus (strain SARG / CCMP1375 / SS120) protein is Isoleucine--tRNA ligase.